The chain runs to 177 residues: Putative adenylate kinase (177 aa).

Residues Gly10, Gly12, Lys13, Thr14, and Thr15 each contribute to the ATP site. Residues 30-50 (NLRDYALEKGIGEMKENELEI) form an NMP region. Residues 99–109 (ERGYGREKLGE) form an LID region. ATP contacts are provided by Arg100 and Lys138.

This sequence belongs to the adenylate kinase family. AK6 subfamily. Interacts with uS11. Not a structural component of 40S pre-ribosomes, but transiently interacts with them by binding to uS11.

It catalyses the reaction AMP + ATP = 2 ADP. It carries out the reaction ATP + H2O = ADP + phosphate + H(+). Broad-specificity nucleoside monophosphate (NMP) kinase that catalyzes the reversible transfer of the terminal phosphate group between nucleoside triphosphates and monophosphates. Also has ATPase activity. Involved in the late maturation steps of the 30S ribosomal particles, specifically 16S rRNA maturation. While NMP activity is not required for ribosome maturation, ATPase activity is. Associates transiently with small ribosomal subunit protein uS11. ATP hydrolysis breaks the interaction with uS11. May temporarily remove uS11 from the ribosome to enable a conformational change of the ribosomal RNA that is needed for the final maturation step of the small ribosomal subunit. The chain is Putative adenylate kinase from Thermococcus kodakarensis (strain ATCC BAA-918 / JCM 12380 / KOD1) (Pyrococcus kodakaraensis (strain KOD1)).